A 1202-amino-acid chain; its full sequence is Voltage-gated inwardly rectifying potassium channel KCNH6 (1202 aa).

Residues 1–405 (MGSAALPHAR…YSPFKAVWDW (405 aa)) lie on the Cytoplasmic side of the membrane. Residues 36-84 (IIYCNDGFCEMFGYSRVEVMQRPCTCDFLTGPDTTKSSIAQLTQALLGS) enclose the PAS domain. The 53-residue stretch at 87–139 (CKLEILYYRKDTSCFRCLVDVVPVKNEDGVVIMFILNFEDLAQLIAKSSGRSL) folds into the PAC domain. Disordered stretches follow at residues 203 to 243 (ENCV…LGPR) and 285 to 315 (ERRANSEGGMGLSGKASHVKPNPPNSTSDSD). A compositionally biased stretch (basic and acidic residues) spans 213-222 (LLEKERRPSL). A helical transmembrane segment spans residues 406–426 (LILLLVIYTAVFTPYSAAFLL). Over 427–443 (NEEQGEEKHWNCSYSCD) the chain is Extracellular. A glycan (N-linked (GlcNAc...) asparagine) is linked at Asn-437. Residues 444–464 (PLNIIDLIVDIMFIVDIVINF) form a helical membrane-spanning segment. Residues 465–485 (RTTYVNINDEVVSHPGKIAIH) are Cytoplasmic-facing. The helical transmembrane segment at 486 to 506 (YFKGWFLIDMVAAIPFDLLIF) threads the bilayer. Residues 507–515 (RSGSDETTT) are Extracellular-facing. Residues 516 to 536 (LIGLLKTARLLRLVRVARKLD) form a helical; Voltage-sensor membrane-spanning segment. The Cytoplasmic portion of the chain corresponds to 537 to 543 (RYSEYGA). A helical membrane pass occupies residues 544–564 (AVLFLLMCTFALIAHWLACIW). The Extracellular portion of the chain corresponds to 565–608 (YAIGNVERPYMEHKIGWLDNLGDQIGKRYNDSDLSSGPSIKDKY). N-linked (GlcNAc...) asparagine glycosylation is present at Asn-594. The pore-forming intramembrane region spans 609 to 629 (VTALYFTFSSLTSVGFGNVSP). The Selectivity filter motif lies at 621-626 (SVGFGN). The Extracellular segment spans residues 630–635 (NTNSEK). A helical membrane pass occupies residues 636-656 (IFSICVMLIGSLMYASIFGNV). The Cytoplasmic segment spans residues 657–1202 (SAIIQRLYSG…HLSDPVLPGS (546 aa)). The cNMP-binding domain stretch occupies residues 739 to 839 (AFRGASKGCL…IQREDLLEVL (101 aa)). Disordered regions lie at residues 912 to 948 (LTNPQDPLSKDQWDDVGSSTTPCSQTSDDEAKPGSPT), 1092 to 1112 (TPCAPLEDEQQTAPGQSPSYA), and 1140 to 1202 (TVYS…LPGS). A compositionally biased stretch (polar residues) spans 928–937 (GSSTTPCSQT). Positions 1179–1195 (EHLEASSEHQDIQRHLS) are enriched in basic and acidic residues.

It belongs to the potassium channel family. H (Eag) (TC 1.A.1.20) subfamily. Kv11.2/KCNH6 sub-subfamily. As to quaternary structure, the potassium channel is probably composed of a homo- or heterotetrameric complex of pore-forming alpha subunits that can associate only within their subfamily.

Its subcellular location is the cell membrane. The enzyme catalyses K(+)(in) = K(+)(out). In terms of biological role, pore-forming (alpha) subunit of voltage-gated inwardly rectifying potassium channel. Characterized by unusual gating kinetics by producing relatively small outward currents during membrane depolarization and large inward currents during subsequent repolarization which reflect a rapid inactivation during depolarization and quick recovery from inactivation but slow deactivation (closing) during repolarization. Activates even more slowly than KCNH2. The polypeptide is Voltage-gated inwardly rectifying potassium channel KCNH6 (Gallus gallus (Chicken)).